The following is a 984-amino-acid chain: Vacuolar sorting protein 3 (984 aa).

One can recognise a CNH domain in the interval 21 to 339 (KIRALSLSPI…GCGPSLLAAD (319 aa)). Residues 663-844 (VLTSDKRTEE…YLDPQNGKEP (182 aa)) form a CHCR repeat.

It belongs to the TRAP1 family. In terms of assembly, component of the class C core vacuole/endosome tethering (CORVET) complex. Their common core is composed of the class C Vps core proteins VPS11, VCL1, VPS18 and VPS33, which in CORVET further associates with VPS3. Interacts directly with VPS11. Binds to RABF2A and RABF2B.

It is found in the endosome membrane. The protein localises to the cytoplasm. Functionally, essential protein required during embryogenesis. Believed to act as a component of the putative class C core vacuole/endosome tethering (CORVET) endosomal tethering complexes. CORVET is required for vacuolar transport of SYP22. Involved in root development. Plays a role in vesicle-mediated protein trafficking of the endocytic membrane transport pathway. The protein is Vacuolar sorting protein 3 of Arabidopsis thaliana (Mouse-ear cress).